We begin with the raw amino-acid sequence, 121 residues long: Holo-[acyl-carrier-protein] synthase (121 aa).

Mg(2+) contacts are provided by Asp8 and Glu55.

It belongs to the P-Pant transferase superfamily. AcpS family. It depends on Mg(2+) as a cofactor.

The protein resides in the cytoplasm. It catalyses the reaction apo-[ACP] + CoA = holo-[ACP] + adenosine 3',5'-bisphosphate + H(+). In terms of biological role, transfers the 4'-phosphopantetheine moiety from coenzyme A to a Ser of acyl-carrier-protein. In Caldicellulosiruptor bescii (strain ATCC BAA-1888 / DSM 6725 / KCTC 15123 / Z-1320) (Anaerocellum thermophilum), this protein is Holo-[acyl-carrier-protein] synthase.